The chain runs to 229 residues: Ribonuclease 3 (229 aa).

The 123-residue stretch at Leu5–Asp127 folds into the RNase III domain. Glu40 is a Mg(2+) binding site. The active site involves Asp44. Mg(2+) is bound by residues Asp113 and Glu116. Glu116 is an active-site residue. One can recognise a DRBM domain in the interval Asp154–Val224.

This sequence belongs to the ribonuclease III family. In terms of assembly, homodimer. Requires Mg(2+) as cofactor.

Its subcellular location is the cytoplasm. The catalysed reaction is Endonucleolytic cleavage to 5'-phosphomonoester.. Functionally, digests double-stranded RNA. Involved in the processing of primary rRNA transcript to yield the immediate precursors to the large and small rRNAs (23S and 16S). Processes some mRNAs, and tRNAs when they are encoded in the rRNA operon. Processes pre-crRNA and tracrRNA of type II CRISPR loci if present in the organism. The chain is Ribonuclease 3 from Pseudomonas putida (strain GB-1).